A 216-amino-acid chain; its full sequence is MRPYVILNAAMTLDGKIATATGSSEISGEEDLRRVHELRRECDAIMVGINTVLADDPRLTVHRVDAAPGDNPVRVVVDSMARTPPHFRVLNDEAPTVIGVSESAPPERVAELRKRAEVVVAGTRRVDLHLLLERLHGMGIERLMLEGGSTLNYSMLTGGLVDEVRVCIAPMIVGGRDARTLVDGEGIDEMADAIRLELKRSYTLGEDLIVEYTVKG.

NADP(+) contacts are provided by residues T51, D55, S79–R82, V126, and G148–L151.

This sequence belongs to the HTP reductase family. Homodimer.

The catalysed reaction is 2,5-diamino-6-(1-D-ribitylamino)pyrimidin-4(3H)-one 5'-phosphate + NADP(+) = 2,5-diamino-6-(1-D-ribosylamino)pyrimidin-4(3H)-one 5'-phosphate + NADPH + H(+). The enzyme catalyses 2,5-diamino-6-(1-D-ribitylamino)pyrimidin-4(3H)-one 5'-phosphate + NAD(+) = 2,5-diamino-6-(1-D-ribosylamino)pyrimidin-4(3H)-one 5'-phosphate + NADH + H(+). The protein operates within cofactor biosynthesis; riboflavin biosynthesis. Its function is as follows. Catalyzes an early step in riboflavin biosynthesis, the NADPH-dependent reduction of the ribose side chain of 2,5-diamino-6-ribosylamino-4(3H)-pyrimidinone 5'-phosphate, yielding 2,5-diamino-6-ribitylamino-4(3H)-pyrimidinone 5'-phosphate. The protein is 2,5-diamino-6-ribosylamino-4(3H)-pyrimidinone 5'-phosphate reductase of Methanothermobacter thermautotrophicus (strain ATCC 29096 / DSM 1053 / JCM 10044 / NBRC 100330 / Delta H) (Methanobacterium thermoautotrophicum).